A 672-amino-acid polypeptide reads, in one-letter code: Glycerophosphocholine phosphodiesterase GPCPD1 (672 aa).

The CBM20 domain occupies 1–113 (MTPSQVTFEI…IIIDDGQFGI (113 aa)). Residues Arg68 and 86–87 (HK) each bind substrate. Ser175 is subject to Phosphoserine. In terms of domain architecture, GP-PDE spans 318-618 (PLDVGHRGAG…DRIYDWMPEQ (301 aa)). Residue Tyr608 is modified to Phosphotyrosine.

The protein belongs to the glycerophosphoryl diester phosphodiesterase family.

Its subcellular location is the cytoplasm. The protein resides in the cytosol. It carries out the reaction sn-glycerol 3-phosphocholine + H2O = sn-glycerol 3-phosphate + choline + H(+). May be involved in the negative regulation of skeletal muscle differentiation, independently of its glycerophosphocholine phosphodiesterase activity. The protein is Glycerophosphocholine phosphodiesterase GPCPD1 (Gpcpd1) of Rattus norvegicus (Rat).